A 463-amino-acid chain; its full sequence is Quinolone resistance protein NorB (463 aa).

14 helical membrane-spanning segments follow: residues 17–37, 53–73, 86–106, 107–127, 142–162, 165–185, 201–221, 230–250, 273–293, 299–319, 334–354, 357–377, 403–423, and 435–455; these read IGIV…VNVV, IAVS…GGLA, IILN…LLLI, IGRL…LSII, YWSI…GAVA, LGWR…LFLI, FDIK…ILIT, SLLF…FIVL, TASN…NTFV, YSSL…LIMI, PMLI…LTFL, ILYV…LGIY, MASA…YAIV, and IALW…LLLV.

It belongs to the major facilitator superfamily. TCR/Tet family.

The protein resides in the cell membrane. In terms of biological role, multidrug efflux pump that acts independently of NorA and is one of the factors that confers resistance against diverse quinolones and chemical compounds. The chain is Quinolone resistance protein NorB (norB) from Staphylococcus aureus (strain MRSA252).